A 506-amino-acid polypeptide reads, in one-letter code: Maturase K (506 aa).

This sequence belongs to the intron maturase 2 family. MatK subfamily.

Its subcellular location is the plastid. It localises to the chloroplast. In terms of biological role, usually encoded in the trnK tRNA gene intron. Probably assists in splicing its own and other chloroplast group II introns. In Medicago truncatula (Barrel medic), this protein is Maturase K.